The following is a 604-amino-acid chain: Sulfite reductase [NADPH] flavoprotein alpha-component (604 aa).

Residues 66–204 (VTVLSASQTG…AADGWTGRIV (139 aa)) form the Flavodoxin-like domain. FMN is bound by residues 72–77 (SQTGNA), 119–122 (STQG), and 155–164 (LGDSSYPNFC). The segment at 212–231 (AKNRATPAPQTTPPAGLQTA) is disordered. The span at 216-231 (ATPAPQTTPPAGLQTA) shows a compositional bias: low complexity. One can recognise an FAD-binding FR-type domain in the interval 239–453 (ADPFPAALLA…VERNDGFRLP (215 aa)). FAD contacts are provided by residues Thr327, Gln361, 391-394 (RLYS), 409-411 (TVG), and 424-427 (GGAS). Residues 524–525 (SR), 530–534 (KIYVQ), and Asp566 contribute to the NADP(+) site. Tyr604 is a binding site for FAD.

This sequence belongs to the NADPH-dependent sulphite reductase flavoprotein subunit CysJ family. The protein in the N-terminal section; belongs to the flavodoxin family. In the C-terminal section; belongs to the flavoprotein pyridine nucleotide cytochrome reductase family. Alpha(8)-beta(8). The alpha component is a flavoprotein, the beta component is a hemoprotein. It depends on FAD as a cofactor. Requires FMN as cofactor.

It catalyses the reaction hydrogen sulfide + 3 NADP(+) + 3 H2O = sulfite + 3 NADPH + 4 H(+). It functions in the pathway sulfur metabolism; hydrogen sulfide biosynthesis; hydrogen sulfide from sulfite (NADPH route): step 1/1. Its function is as follows. Component of the sulfite reductase complex that catalyzes the 6-electron reduction of sulfite to sulfide. This is one of several activities required for the biosynthesis of L-cysteine from sulfate. The flavoprotein component catalyzes the electron flow from NADPH -&gt; FAD -&gt; FMN to the hemoprotein component. This chain is Sulfite reductase [NADPH] flavoprotein alpha-component, found in Neisseria meningitidis serogroup C / serotype 2a (strain ATCC 700532 / DSM 15464 / FAM18).